The chain runs to 177 residues: Large ribosomal subunit protein uL6 (177 aa).

The protein belongs to the universal ribosomal protein uL6 family. As to quaternary structure, part of the 50S ribosomal subunit.

In terms of biological role, this protein binds to the 23S rRNA, and is important in its secondary structure. It is located near the subunit interface in the base of the L7/L12 stalk, and near the tRNA binding site of the peptidyltransferase center. In Laribacter hongkongensis (strain HLHK9), this protein is Large ribosomal subunit protein uL6.